The following is a 54-amino-acid chain: Ovomucoid (54 aa).

In terms of domain architecture, Kazal-like spans 4-54; the sequence is VDCSEYPKPVCSLEYMPLCGSDSQTYSNECNFCNAVVDSNGTLTLSHFGKC. Intrachain disulfides connect C6-C36, C14-C33, and C22-C54. An N-linked (GlcNAc...) asparagine glycan is attached at N43.

Its subcellular location is the secreted. This Caracara plancus (Southern caracara) protein is Ovomucoid.